The sequence spans 333 residues: MGKNITVLGAGAWGTAFGQVLADAGNTVTMWAKEQQIVEGIRDHHHNAVRLPSVEKLPDNMTATGDRAEAVKNADIVVVAIAAQFARVALVEFKGLIPDHAIVVSLMKGIERGTNKRMDEVVRESLDLPADRFAAISGPNLSKEIADRHPAATVVACTNLDNATKVAEACTTSYFKPFVTTDVIGLEMCGSLKNVTALAVGMARGAGYGENTAAMIETRGLAELTALGVAAGADPKTFFGLAGVGDLIATCGSSLSRNYTFGANLGKGLTVEEATKVSNGVAEGVPTTDAVVALGNQLDVPTPLAYQMSRVLNEGISCSEMLAGLFGHEVTGE.

Residues W13, K33, and K108 each coordinate NADPH. K108 and G138 together coordinate sn-glycerol 3-phosphate. S142 is an NADPH binding site. 5 residues coordinate sn-glycerol 3-phosphate: K193, D246, S256, R257, and N258. K193 functions as the Proton acceptor in the catalytic mechanism. Residue R257 participates in NADPH binding. NADPH contacts are provided by V281 and E283.

This sequence belongs to the NAD-dependent glycerol-3-phosphate dehydrogenase family.

Its subcellular location is the cytoplasm. It carries out the reaction sn-glycerol 3-phosphate + NAD(+) = dihydroxyacetone phosphate + NADH + H(+). It catalyses the reaction sn-glycerol 3-phosphate + NADP(+) = dihydroxyacetone phosphate + NADPH + H(+). It participates in membrane lipid metabolism; glycerophospholipid metabolism. Its function is as follows. Catalyzes the reduction of the glycolytic intermediate dihydroxyacetone phosphate (DHAP) to sn-glycerol 3-phosphate (G3P), the key precursor for phospholipid synthesis. The chain is Glycerol-3-phosphate dehydrogenase [NAD(P)+] from Bifidobacterium longum (strain DJO10A).